The chain runs to 523 residues: Ribonuclease Y (523 aa).

A helical membrane pass occupies residues Trp18 to Phe38. Residues Thr213–Leu276 enclose the KH domain. Residues Val339–Thr432 form the HD domain.

Belongs to the RNase Y family.

It localises to the cell membrane. Endoribonuclease that initiates mRNA decay. This Opitutus terrae (strain DSM 11246 / JCM 15787 / PB90-1) protein is Ribonuclease Y.